Here is a 157-residue protein sequence, read N- to C-terminus: Crossover junction endodeoxyribonuclease RuvC (157 aa).

Residues Asp-7, Glu-66, and Asp-139 contribute to the active site. Mg(2+) is bound by residues Asp-7, Glu-66, and Asp-139.

This sequence belongs to the RuvC family. In terms of assembly, homodimer which binds Holliday junction (HJ) DNA. The HJ becomes 2-fold symmetrical on binding to RuvC with unstacked arms; it has a different conformation from HJ DNA in complex with RuvA. In the full resolvosome a probable DNA-RuvA(4)-RuvB(12)-RuvC(2) complex forms which resolves the HJ. Mg(2+) is required as a cofactor.

The protein localises to the cytoplasm. It carries out the reaction Endonucleolytic cleavage at a junction such as a reciprocal single-stranded crossover between two homologous DNA duplexes (Holliday junction).. Functionally, the RuvA-RuvB-RuvC complex processes Holliday junction (HJ) DNA during genetic recombination and DNA repair. Endonuclease that resolves HJ intermediates. Cleaves cruciform DNA by making single-stranded nicks across the HJ at symmetrical positions within the homologous arms, yielding a 5'-phosphate and a 3'-hydroxyl group; requires a central core of homology in the junction. The consensus cleavage sequence is 5'-(A/T)TT(C/G)-3'. Cleavage occurs on the 3'-side of the TT dinucleotide at the point of strand exchange. HJ branch migration catalyzed by RuvA-RuvB allows RuvC to scan DNA until it finds its consensus sequence, where it cleaves and resolves the cruciform DNA. Its function is as follows. Required for efficient infection in a mouse model system. The polypeptide is Crossover junction endodeoxyribonuclease RuvC (Helicobacter pylori (strain G27)).